Reading from the N-terminus, the 117-residue chain is Transcription elongation factor A protein-like 8 (117 aa).

2 stretches are compositionally biased toward basic and acidic residues: residues 1–10 and 61–75; these read MQKSCEENEG and FKEDTPVRHLDPEEM. Residues 1–75 are disordered; that stretch reads MQKSCEENEG…PVRHLDPEEM (75 aa). Residues 73 to 100 are a coiled coil; sequence EEMIRGVDELERLREEIRRVRNKFVMMH.

Belongs to the TFS-II family. TFA subfamily.

The protein localises to the nucleus. Its function is as follows. May be involved in transcriptional regulation. The chain is Transcription elongation factor A protein-like 8 (TCEAL8) from Homo sapiens (Human).